The sequence spans 156 residues: ATP synthase subunit b (156 aa).

The chain crosses the membrane as a helical span at residues 7 to 27 (LIAQFVVFFILAGFTMKFVWP).

The protein belongs to the ATPase B chain family. F-type ATPases have 2 components, F(1) - the catalytic core - and F(0) - the membrane proton channel. F(1) has five subunits: alpha(3), beta(3), gamma(1), delta(1), epsilon(1). F(0) has three main subunits: a(1), b(2) and c(10-14). The alpha and beta chains form an alternating ring which encloses part of the gamma chain. F(1) is attached to F(0) by a central stalk formed by the gamma and epsilon chains, while a peripheral stalk is formed by the delta and b chains.

The protein localises to the cell inner membrane. Functionally, f(1)F(0) ATP synthase produces ATP from ADP in the presence of a proton or sodium gradient. F-type ATPases consist of two structural domains, F(1) containing the extramembraneous catalytic core and F(0) containing the membrane proton channel, linked together by a central stalk and a peripheral stalk. During catalysis, ATP synthesis in the catalytic domain of F(1) is coupled via a rotary mechanism of the central stalk subunits to proton translocation. In terms of biological role, component of the F(0) channel, it forms part of the peripheral stalk, linking F(1) to F(0). This is ATP synthase subunit b from Herminiimonas arsenicoxydans.